A 189-amino-acid polypeptide reads, in one-letter code: uncharacterized protein (189 aa).

Transmembrane regions (helical) follow at residues Phe-20–Phe-40, Thr-46–Ile-66, Val-100–Ile-120, and Phe-126–Ile-146.

It to M.jannaschii MJ0795.1 and MJ1249.1.

Its subcellular location is the cell membrane. This is an uncharacterized protein from Methanocaldococcus jannaschii (strain ATCC 43067 / DSM 2661 / JAL-1 / JCM 10045 / NBRC 100440) (Methanococcus jannaschii).